Consider the following 289-residue polypeptide: Acetyl-coenzyme A carboxylase carboxyl transferase subunit beta (289 aa).

Residues 28–289 form the CoA carboxyltransferase N-terminal domain; the sequence is VMTKCPKCKK…QGGGMAVWQS (262 aa). Cys32, Cys35, Cys51, and Cys54 together coordinate Zn(2+). The C4-type zinc finger occupies 32-54; it reads CPKCKKIMYTKELLKNLKVCVNC.

This sequence belongs to the AccD/PCCB family. In terms of assembly, acetyl-CoA carboxylase is a heterohexamer composed of biotin carboxyl carrier protein (AccB), biotin carboxylase (AccC) and two subunits each of ACCase subunit alpha (AccA) and ACCase subunit beta (AccD). Zn(2+) serves as cofactor.

It is found in the cytoplasm. It catalyses the reaction N(6)-carboxybiotinyl-L-lysyl-[protein] + acetyl-CoA = N(6)-biotinyl-L-lysyl-[protein] + malonyl-CoA. The protein operates within lipid metabolism; malonyl-CoA biosynthesis; malonyl-CoA from acetyl-CoA: step 1/1. In terms of biological role, component of the acetyl coenzyme A carboxylase (ACC) complex. Biotin carboxylase (BC) catalyzes the carboxylation of biotin on its carrier protein (BCCP) and then the CO(2) group is transferred by the transcarboxylase to acetyl-CoA to form malonyl-CoA. In Bacillus mycoides (strain KBAB4) (Bacillus weihenstephanensis), this protein is Acetyl-coenzyme A carboxylase carboxyl transferase subunit beta.